The primary structure comprises 81 residues: UPF0386 protein Smed_0945 (81 aa).

The protein belongs to the UPF0386 family.

The protein is UPF0386 protein Smed_0945 of Sinorhizobium medicae (strain WSM419) (Ensifer medicae).